Here is a 66-residue protein sequence, read N- to C-terminus: Cold shock-like protein CspD (66 aa).

The CSD domain occupies 4-63; that stretch reads GKVKWFNGEKGFGFIEVEGGEDVFVHFSAIQGDGFKTLEEGQEVSFEIVDGNRGPQAANV.

Homodimer.

It localises to the cytoplasm. The polypeptide is Cold shock-like protein CspD (cspD) (Bacillus cereus).